Consider the following 255-residue polypeptide: F-box/SPRY domain-containing protein 1 (255 aa).

In terms of domain architecture, F-box spans 3–51 (DPVAALCNYNVLEVIFSYLELEDLSHCSQVCKSWYHFLNDENSDVWRWH). Residues 61–253 (LKSDLLSSVS…VSMVYLGTPL (193 aa)) form the B30.2/SPRY domain.

This sequence belongs to the FBXO45/Fsn family. Component of an E3 ubiquitin ligase complex composed of hiw and Fsn.

The protein resides in the synapse. The protein operates within protein modification; protein ubiquitination. Functionally, required in the presynaptic motoneuron to down-regulate the levels of wnd and restrain synaptic terminal growth at the neuromuscular junction (NMJ). In Drosophila erecta (Fruit fly), this protein is F-box/SPRY domain-containing protein 1.